The following is a 146-amino-acid chain: D-aminoacyl-tRNA deacylase (146 aa).

A Gly-cisPro motif, important for rejection of L-amino acids motif is present at residues 137-138 (GP).

It belongs to the DTD family. As to quaternary structure, homodimer.

Its subcellular location is the cytoplasm. It carries out the reaction glycyl-tRNA(Ala) + H2O = tRNA(Ala) + glycine + H(+). It catalyses the reaction a D-aminoacyl-tRNA + H2O = a tRNA + a D-alpha-amino acid + H(+). An aminoacyl-tRNA editing enzyme that deacylates mischarged D-aminoacyl-tRNAs. Also deacylates mischarged glycyl-tRNA(Ala), protecting cells against glycine mischarging by AlaRS. Acts via tRNA-based rather than protein-based catalysis; rejects L-amino acids rather than detecting D-amino acids in the active site. By recycling D-aminoacyl-tRNA to D-amino acids and free tRNA molecules, this enzyme counteracts the toxicity associated with the formation of D-aminoacyl-tRNA entities in vivo and helps enforce protein L-homochirality. The protein is D-aminoacyl-tRNA deacylase of Shouchella clausii (strain KSM-K16) (Alkalihalobacillus clausii).